The primary structure comprises 339 residues: MNTVNASMTVIGAGSYGTALAITLARNGHSVVLWGHNPEQIQKMQRDRCNQAFLPDVAFPDTLLLEADLARALAASRDVLVVVPSHVFGDVLRQLKPHLRPDARIVWATKGLEAETGRLLQDVAREALGEAIPLAVVSGPTFAKELAAGLPTAIALASTDAQFAEDLQQLLHCGKSFRVYSNPDFIGVQLGGAVKNVIAIGAGMSDGIGFGANARTALITRGLTEMTRLGSALGADPSTFMGMAGLGDLVLTCTDNQSRNRRFGIMLGQGKGVQEAQDSIGQVVEGYRNTKEVLALAQRYGVEMPITEQIYQVLYCHKNAREAALSLLGRTRKDEKHSA.

Positions 15, 16, 36, and 110 each coordinate NADPH. Sn-glycerol 3-phosphate-binding residues include K110, G139, and T141. A143 contacts NADPH. 5 residues coordinate sn-glycerol 3-phosphate: K195, D248, S258, R259, and N260. Catalysis depends on K195, which acts as the Proton acceptor. An NADPH-binding site is contributed by R259. Residues V283 and E285 each coordinate NADPH.

It belongs to the NAD-dependent glycerol-3-phosphate dehydrogenase family.

It is found in the cytoplasm. It carries out the reaction sn-glycerol 3-phosphate + NAD(+) = dihydroxyacetone phosphate + NADH + H(+). The enzyme catalyses sn-glycerol 3-phosphate + NADP(+) = dihydroxyacetone phosphate + NADPH + H(+). The protein operates within membrane lipid metabolism; glycerophospholipid metabolism. Functionally, catalyzes the reduction of the glycolytic intermediate dihydroxyacetone phosphate (DHAP) to sn-glycerol 3-phosphate (G3P), the key precursor for phospholipid synthesis. This Serratia proteamaculans (strain 568) protein is Glycerol-3-phosphate dehydrogenase [NAD(P)+].